The sequence spans 187 residues: Probable chorismate pyruvate-lyase (187 aa).

Substrate contacts are provided by R77, L115, and E174.

The protein belongs to the UbiC family.

It localises to the cytoplasm. It carries out the reaction chorismate = 4-hydroxybenzoate + pyruvate. Its pathway is cofactor biosynthesis; ubiquinone biosynthesis. Functionally, removes the pyruvyl group from chorismate, with concomitant aromatization of the ring, to provide 4-hydroxybenzoate (4HB) for the ubiquinone pathway. This Shewanella sp. (strain ANA-3) protein is Probable chorismate pyruvate-lyase.